A 250-amino-acid polypeptide reads, in one-letter code: 23S rRNA (guanine(2535)-N(1))-methyltransferase (250 aa).

It catalyses the reaction guanosine(2535) in 23S rRNA + S-adenosyl-L-methionine = N(1)-methylguanosine(2535) in 23S rRNA + S-adenosyl-L-homocysteine + H(+). Specifically methylates the guanine-2535 in 23S ribosomal RNA. Confers resistance to antibiotic avilamycin, an orthosomycin antibiotic. The protein is 23S rRNA (guanine(2535)-N(1))-methyltransferase (aviRa) of Streptomyces viridochromogenes.